We begin with the raw amino-acid sequence, 1070 residues long: DNA-directed RNA polymerase subunit beta (1070 aa).

It belongs to the RNA polymerase beta chain family. In plastids the minimal PEP RNA polymerase catalytic core is composed of four subunits: alpha, beta, beta', and beta''. When a (nuclear-encoded) sigma factor is associated with the core the holoenzyme is formed, which can initiate transcription.

The protein localises to the plastid. It localises to the chloroplast. It catalyses the reaction RNA(n) + a ribonucleoside 5'-triphosphate = RNA(n+1) + diphosphate. DNA-dependent RNA polymerase catalyzes the transcription of DNA into RNA using the four ribonucleoside triphosphates as substrates. The sequence is that of DNA-directed RNA polymerase subunit beta from Piper cenocladum (Ant piper).